The chain runs to 316 residues: Ribosomal RNA small subunit methyltransferase H (316 aa).

S-adenosyl-L-methionine-binding positions include 35-37, aspartate 55, phenylalanine 79, aspartate 101, and glutamine 108; that span reads GGH.

It belongs to the methyltransferase superfamily. RsmH family.

The protein resides in the cytoplasm. It carries out the reaction cytidine(1402) in 16S rRNA + S-adenosyl-L-methionine = N(4)-methylcytidine(1402) in 16S rRNA + S-adenosyl-L-homocysteine + H(+). Its function is as follows. Specifically methylates the N4 position of cytidine in position 1402 (C1402) of 16S rRNA. The protein is Ribosomal RNA small subunit methyltransferase H of Vibrio vulnificus (strain CMCP6).